The following is a 378-amino-acid chain: Tafazzin (378 aa).

Residues 1 to 137 (MFMVVCSNLR…RLRNPSKFWY (137 aa)) lie on the Mitochondrial intermembrane side of the membrane. Positions 46 to 112 (APEARPVPDE…DQDADPSLDV (67 aa)) are disordered. Over residues 51-67 (PVPDERYPGSQQDRKDI) the composition is skewed to basic and acidic residues. The stretch at 138-158 (VVSQFVVSAVGIFSKVVLMFL) is an intramembrane region. Topologically, residues 159–378 (NKPRVYNRER…ETEKLHRERN (220 aa)) are mitochondrial intermembrane. The HXXXXD motif motif lies at 188 to 193 (HYSCFD).

The protein belongs to the taffazin family. Associates with multiple protein complexes. Association with large protein complexes occurs only in the presence of cardiolipin.

It localises to the mitochondrion outer membrane. The protein localises to the mitochondrion inner membrane. Its subcellular location is the mitochondrion. The protein resides in the mitochondrion membrane. It is found in the golgi apparatus membrane. It localises to the endoplasmic reticulum membrane. It carries out the reaction 1'-[1,2-diacyl-sn-glycero-3-phospho],3'-[1-acyl-sn-glycero-3-phospho]-glycerol + a 1,2-diacyl-sn-glycero-3-phosphocholine = a cardiolipin + a 1-acyl-sn-glycero-3-phosphocholine. It catalyses the reaction 1'-[1,2-di-(9Z,12Z-octadecadienoyl)-sn-glycero-3-phospho]-3'-[1-(9Z,12Z-octadecadienoyl)-sn-glycero-3-phospho]-glycerol + 1-hexadecanoyl-2-(9Z,12Z-octadecadienoyl)-sn-glycero-3-phosphocholine = 1',3'-bis-[1,2-di-(9Z,12Z-octadecadienoyl)-sn-glycero-3-phospho]-glycerol + 1-hexadecanoyl-sn-glycero-3-phosphocholine. The catalysed reaction is 1'-[1,2-di-(9Z,12Z-octadecadienoyl)-sn-glycero-3-phospho]-3'-[2-(9Z,12Z-octadecadienoyl)-sn-glycero-3-phospho]-glycerol + 1-hexadecanoyl-2-(9Z,12Z-octadecadienoyl)-sn-glycero-3-phosphocholine = 1',3'-bis-[1,2-di-(9Z,12Z-octadecadienoyl)-sn-glycero-3-phospho]-glycerol + 1-hexadecanoyl-sn-glycero-3-phosphocholine. The enzyme catalyses 1,2-di-(9Z,12Z-octadecadienoyl)-sn-glycero-3-phosphocholine + 1'-[1,2-di-(9Z,12Z-octadecadienoyl)-sn-glycero-3-phospho]-3'-[1-(9Z,12Z-octadecadienoyl)-sn-glycero-3-phospho]-glycerol = 1-(9Z,12Z)-octadecadienoyl-sn-glycero-3-phosphocholine + 1',3'-bis-[1,2-di-(9Z,12Z-octadecadienoyl)-sn-glycero-3-phospho]-glycerol. It carries out the reaction 1-tetradecanoyl-sn-glycero-3-phosphocholine + 1',3'-bis-[1,2-di-(9Z,12Z-octadecadienoyl)-sn-glycero-3-phospho]-glycerol = 1-tetradecanoyl-2-(9Z,12Z-octadecadienoyl)-sn-glycero-3-phosphocholine + 1'-[1,2-di-(9Z,12Z-octadecadienoyl)-sn-glycero-3-phospho]-3'-[1-(9Z,12Z-octadecadienoyl)-sn-glycero-3-phospho]-glycerol. It catalyses the reaction 1',3'-bis[1,2-di-(9Z-octadecenoyl)-sn-glycero-3-phospho]-glycerol + 1-nonadecanoyl-sn-glycero-3-phosphocholine = 1-nonadecanoyl-2-(9Z-octadecenoyl)-sn-glycero-3-phosphocholine + 1'-[1,2-di-(9Z-octadecenoyl)-sn-glycero-3-phospho]-3'-[1-(9Z-octadecenoyl)-sn-glycero-3-phospho]-glycerol. The catalysed reaction is a 1,2-diacyl-sn-glycero-3-phospho-(1'-sn-glycerol) + a 1-acyl-sn-glycero-3-phosphocholine = 1-acyl-sn-glycero-3-phospho-(1'-sn-glycerol) + a 1,2-diacyl-sn-glycero-3-phosphocholine. The enzyme catalyses 1-hexadecanoyl-2-(9Z,12Z-octadecadienoyl)-sn-glycero-3-phospho-(1'-sn-glycerol) + 1-hexadecanoyl-sn-glycero-3-phosphocholine = 1-hexadecanoyl-sn-glycero-3-phospho-(1'-sn-glycerol) + 1-hexadecanoyl-2-(9Z,12Z-octadecadienoyl)-sn-glycero-3-phosphocholine. It carries out the reaction 1,2-di-(9Z-octadecenoyl)-sn-glycero-3-phospho-(1'-sn-glycerol) + 1-nonadecanoyl-sn-glycero-3-phosphocholine = 1-nonadecanoyl-2-(9Z-octadecenoyl)-sn-glycero-3-phosphocholine + 1-(9Z-octadecenoyl)-sn-glycero-3-phospho-(1'-sn-glycerol). It catalyses the reaction a 1,2-diacyl-sn-glycero-3-phosphate + a 1-acyl-sn-glycero-3-phosphocholine = a 1-acyl-sn-glycero-3-phosphate + a 1,2-diacyl-sn-glycero-3-phosphocholine. The catalysed reaction is 1-hexadecanoyl-2-(9Z,12Z-octadecadienoyl)-sn-glycero-3-phosphate + 1-hexadecanoyl-sn-glycero-3-phosphocholine = 1-hexadecanoyl-2-(9Z,12Z-octadecadienoyl)-sn-glycero-3-phosphocholine + 1-hexadecanoyl-sn-glycero-3-phosphate. The enzyme catalyses 1-hexadecanoyl-2-(9Z,12Z-octadecadienoyl)-sn-glycero-3-phosphocholine + 1-(9Z-octadecenoyl)-sn-glycero-3-phosphate = 1-(9Z)-octadecenoyl-2-(9Z,12Z)-octadecadienoyl-sn-glycero-3-phosphate + 1-hexadecanoyl-sn-glycero-3-phosphocholine. It carries out the reaction a 1-acyl-sn-glycero-3-phosphocholine + a 1,2-diacyl-sn-glycero-3-phosphoethanolamine = a 1-acyl-sn-glycero-3-phosphoethanolamine + a 1,2-diacyl-sn-glycero-3-phosphocholine. It catalyses the reaction 1-hexadecanoyl-2-(9Z,12Z-octadecadienoyl)-sn-glycero-3-phosphoethanolamine + 1-hexadecanoyl-sn-glycero-3-phosphocholine = 1-hexadecanoyl-2-(9Z,12Z-octadecadienoyl)-sn-glycero-3-phosphocholine + 1-hexadecanoyl-sn-glycero-3-phosphoethanolamine. The catalysed reaction is 1,2-di-(9Z,12Z-octadecadienoyl)-sn-glycero-3-phosphoethanolamine + 1-tetradecanoyl-sn-glycero-3-phosphocholine = 1-(9Z,12Z-octadecadienoyl)-sn-glycero-3-phosphoethanolamine + 1-tetradecanoyl-2-(9Z,12Z-octadecadienoyl)-sn-glycero-3-phosphocholine. The enzyme catalyses 1'-[1,2-diacyl-sn-glycero-3-phospho],3'-[1-acyl-sn-glycero-3-phospho]-glycerol + a 1,2-diacyl-sn-glycero-3-phosphoethanolamine = a cardiolipin + a 1-acyl-sn-glycero-3-phosphoethanolamine. It carries out the reaction 1-hexadecanoyl-2-(9Z,12Z-octadecadienoyl)-sn-glycero-3-phosphoethanolamine + 1'-[1,2-di-(9Z,12Z-octadecadienoyl)-sn-glycero-3-phospho]-3'-[1-(9Z,12Z-octadecadienoyl)-sn-glycero-3-phospho]-glycerol = 1',3'-bis-[1,2-di-(9Z,12Z-octadecadienoyl)-sn-glycero-3-phospho]-glycerol + 1-hexadecanoyl-sn-glycero-3-phosphoethanolamine. It catalyses the reaction 1'-[1-(9Z,12Z-octadecadienoyl)-2-(9Z-octadecenoyl)-sn-glycero-3-phospho]-3'-[1-(9Z,12Z-octadecadienoyl)-sn-glycero-3-phospho]-glycerol + 1',3'-bis-[1,2-di-(9Z,12Z-octadecadienoyl)-sn-glycero-3-phospho]-glycerol = 1'-[1,2-di-(9Z,12Z-octadecadienoyl)-sn-glycero-3-phospho]-3'-[1-(9Z,12Z-octadecadienoyl)-2-(9Z-octadecenoyl)-sn-glycero-3-phospho]-glycerol + 1'-[1,2-di-(9Z,12Z-octadecadienoyl)-sn-glycero-3-phospho]-3'-[1-(9Z,12Z-octadecadienoyl)-sn-glycero-3-phospho]-glycerol. The catalysed reaction is 1,2-di-(9Z-hexadecenoyl)-sn-glycero-3-phosphocholine + 1-hexadecanoyl-sn-glycero-3-phosphocholine = 1-hexadecanoyl-2-(9Z-hexadecenoyl)-sn-glycero-3-phosphocholine + 1-(9Z-hexadecenoyl)-sn-glycero-3-phosphocholine. The enzyme catalyses 1,2-dioctadecanoyl-sn-glycero-3-phosphocholine + 1-hexadecanoyl-sn-glycero-3-phosphocholine = 1-hexadecanoyl-2-octadecanoyl-sn-glycero-3-phosphocholine + 1-octadecanoyl-sn-glycero-3-phosphocholine. It carries out the reaction 1,2-di-(9Z-octadecenoyl)-sn-glycero-3-phosphocholine + 1-hexadecanoyl-sn-glycero-3-phosphocholine = 1-hexadecanoyl-2-(9Z-octadecenoyl)-sn-glycero-3-phosphocholine + 1-(9Z-octadecenoyl)-sn-glycero-3-phosphocholine. It catalyses the reaction 1,2-di-(9Z,12Z-octadecadienoyl)-sn-glycero-3-phosphocholine + 1-(9Z-octadecenoyl)-sn-glycero-3-phosphocholine = 1-(9Z)-octadecenoyl-2-(9Z,12Z)-octadecadienoyl-sn-glycero-3-phosphocholine + 1-(9Z,12Z)-octadecadienoyl-sn-glycero-3-phosphocholine. The catalysed reaction is 1,2-di-(9Z,12Z,15Z-octadecatrienoyl)-sn-glycero-3-phosphocholine + 1-tetradecanoyl-sn-glycero-3-phosphocholine = 1-tetradecanoyl-2-(9Z,12Z,15Z-octadecatrienoyl)-sn-glycero-3-phosphocholine + 1-(9Z,12Z,15Z-octadecatrienoyl)-sn-glycero-3-phosphocholine. The enzyme catalyses 1-nonadecanoyl-sn-glycero-3-phosphocholine + 1-octadecanoyl-2-(9Z-octadecenoyl)-sn-glycero-3-phosphocholine = 1-nonadecanoyl-2-(9Z-octadecenoyl)-sn-glycero-3-phosphocholine + 1-octadecanoyl-sn-glycero-3-phosphocholine. It carries out the reaction 1-(9Z)-octadecenoyl-2-octadecanoyl-sn-glycero-3-phosphocholine + 1-nonadecanoyl-sn-glycero-3-phosphocholine = 2-octadecanoyl-sn-glycero-3-phosphocholine + 1-nonadecanoyl-2-(9Z-octadecenoyl)-sn-glycero-3-phosphocholine. It participates in phospholipid metabolism. Acyltransferase required to remodel newly synthesized phospholipid cardiolipin (1',3'-bis-[1,2-diacyl-sn-glycero-3-phospho]-glycerol or CL), a key component of the mitochondrial inner membrane, with tissue specific acyl chains necessary for adequate mitochondrial function. Its role in cellular physiology is to improve mitochondrial performance. CL is critical for the coassembly of lipids and proteins in mitochondrial membranes. For instance, remodeling of the acyl groups of CL in the mitochondrial inner membrane affects the assembly and stability of respiratory chain complex IV and its supercomplex forms. Catalyzes the transacylation between phospholipids and lysophospholipids, with the highest rate being between phosphatidylcholine (1,2-diacyl-sn-glycero-3-phosphocholine or PC) and CL. Catalyzes both 1-acyl-sn-glycero-3-phosphocholine (lysophosphatidylcholine or LPC) reacylation and PC-CL transacylation, that means, it exchanges acyl groups between CL and PC by a combination of forward and reverse transacylations. Also catalyzes transacylations between other phospholipids such as phosphatidylethanolamine (1,2-diacyl-sn-glycero-3-phosphoethanolamine or PE) and CL, between PC and PE, and between PC and phosphatidate (1,2-diacyl-sn-glycero-3-phosphate or PA), although at lower rate. Not regiospecific, it transfers acyl groups into any of the sn-1 and sn-2 positions of the monolysocardiolipin (MLCL), which is an important prerequisite for uniformity and symmetry in CL acyl distribution. Cannot transacylate dilysocardiolipin (DLCL), thus, the role of MLCL is limited to that of an acyl acceptor. CoA-independent, it can reshuffle molecular species within a single phospholipid class. Redistributes fatty acids between MLCL, CL, and other lipids, which prolongs the half-life of CL. Its action is completely reversible, which allows for cyclic changes, such as fission and fusion or bending and flattening of the membrane. Hence, by contributing to the flexibility of the lipid composition, it plays an important role in the dynamics of mitochondria membranes. Essential for the final stage of spermatogenesis, spermatid individualization. Required for the initiation of mitophagy. The polypeptide is Tafazzin (Drosophila melanogaster (Fruit fly)).